The following is an 859-amino-acid chain: Suppressor protein MPT5 (859 aa).

The tract at residues 85-108 is disordered; it reads MNNTSTSNSANSFSPNPNAASNST. Low complexity predominate over residues 86–108; the sequence is NNTSTSNSANSFSPNPNAASNST. One can recognise a PUM-HD domain in the interval 188 to 596; that stretch reads DNSSFGLSSS…KIKLKVKAYA (409 aa). 8 Pumilio repeats span residues 209–247, 248–283, 284–320, 325–362, 363–400, 401–438, 439–474, and 503–539; these read PLRDLDYIKLATDQFGCRFLQKKLETPSESNMVRDLMYE, QIKPFFLDLILDPFGNYLVQKLCDYLTAEQKTLLIQ, TIYPNVFQISINQYGTRSLQKIIDTVDNEVQIDLIIK, EFTSIEQVVTLINDLNGNHVIQKCIFKFSPSKFGFIID, AIVEQNNIITISTHKHGCCVLQKLLSVCTLQQIFKISV, KIVQFLPGLINDQFGNYIIQFLLDIKELDFYLLAELFN, RLSNELCQLSCLKFSSNVVEKFIKKLFRIITGFIVN, and DIFTVNLNVLIRDNFGNYALQTLLDVKNYSPLLAYNK. The disordered stretch occupies residues 620–658; the sequence is TINNENKNPHNKNSHNHNHNHNHNHAHNNNNNNNQKSHT. Over residues 628-645 the composition is skewed to basic residues; it reads PHNKNSHNHNHNHNHNHA. A phosphoserine mark is found at S662, S834, and S838.

Its subcellular location is the cytoplasm. Functionally, RNA-binding protein involved in post-transcriptional regulation. Negatively regulates expression of HO by binding to the 3'-UTR of HO mRNA. Predominantly binds to mRNAs encoding chromatin modifiers and spindle pole body components. Recognizes and binds to 5'-TGTAA[CT]A[AT]TA-3' in the 3'-UTR of target mRNAs. Multicopy suppressor of POP2 mutation. Required for high temperature growth. This Saccharomyces cerevisiae (strain ATCC 204508 / S288c) (Baker's yeast) protein is Suppressor protein MPT5 (MPT5).